The chain runs to 360 residues: DNA polymerase IV (360 aa).

The UmuC domain occupies isoleucine 8–glycine 189. Residues aspartate 12 and aspartate 107 each contribute to the Mg(2+) site. Glutamate 108 is a catalytic residue.

This sequence belongs to the DNA polymerase type-Y family. Monomer. Mg(2+) serves as cofactor.

The protein resides in the cytoplasm. The enzyme catalyses DNA(n) + a 2'-deoxyribonucleoside 5'-triphosphate = DNA(n+1) + diphosphate. Its function is as follows. Poorly processive, error-prone DNA polymerase involved in untargeted mutagenesis. Copies undamaged DNA at stalled replication forks, which arise in vivo from mismatched or misaligned primer ends. These misaligned primers can be extended by PolIV. Exhibits no 3'-5' exonuclease (proofreading) activity. May be involved in translesional synthesis, in conjunction with the beta clamp from PolIII. The protein is DNA polymerase IV of Vibrio cholerae serotype O1 (strain ATCC 39315 / El Tor Inaba N16961).